A 356-amino-acid polypeptide reads, in one-letter code: Cyclin-D2-2 (356 aa).

Positions Leu325–Ala343 are enriched in polar residues. The segment at Leu325–Ile356 is disordered. Basic residues predominate over residues Ser346–Ile356.

It belongs to the cyclin family. Cyclin D subfamily.

The sequence is that of Cyclin-D2-2 (CYCD2-2) from Oryza sativa subsp. japonica (Rice).